The primary structure comprises 551 residues: Hydroxylamine reductase (551 aa).

C3, C6, C18, and C25 together coordinate [2Fe-2S] cluster. Hybrid [4Fe-2O-2S] cluster-binding residues include H249, E273, C317, C405, C433, C459, E493, and K495. C405 carries the cysteine persulfide modification.

This sequence belongs to the HCP family. [2Fe-2S] cluster serves as cofactor. The cofactor is hybrid [4Fe-2O-2S] cluster.

It localises to the cytoplasm. It carries out the reaction A + NH4(+) + H2O = hydroxylamine + AH2 + H(+). Its function is as follows. Catalyzes the reduction of hydroxylamine to form NH(3) and H(2)O. This is Hydroxylamine reductase from Actinobacillus pleuropneumoniae serotype 7 (strain AP76).